The chain runs to 401 residues: Formate-dependent phosphoribosylglycinamide formyltransferase (401 aa).

Residues 22–23 (EL) and E82 contribute to the N(1)-(5-phospho-beta-D-ribosyl)glycinamide site. Residues R115, K157, 162–167 (SSGKGQ), 197–200 (EGFI), and E205 contribute to the ATP site. Residues 120–315 (RLAAESLGLP…EFELHARAIL (196 aa)) enclose the ATP-grasp domain. 2 residues coordinate Mg(2+): E274 and E286. Residues D293, K362, and 369 to 370 (RR) each bind N(1)-(5-phospho-beta-D-ribosyl)glycinamide.

Belongs to the PurK/PurT family. As to quaternary structure, homodimer.

The enzyme catalyses N(1)-(5-phospho-beta-D-ribosyl)glycinamide + formate + ATP = N(2)-formyl-N(1)-(5-phospho-beta-D-ribosyl)glycinamide + ADP + phosphate + H(+). Its pathway is purine metabolism; IMP biosynthesis via de novo pathway; N(2)-formyl-N(1)-(5-phospho-D-ribosyl)glycinamide from N(1)-(5-phospho-D-ribosyl)glycinamide (formate route): step 1/1. Involved in the de novo purine biosynthesis. Catalyzes the transfer of formate to 5-phospho-ribosyl-glycinamide (GAR), producing 5-phospho-ribosyl-N-formylglycinamide (FGAR). Formate is provided by PurU via hydrolysis of 10-formyl-tetrahydrofolate. This chain is Formate-dependent phosphoribosylglycinamide formyltransferase, found in Cupriavidus taiwanensis (strain DSM 17343 / BCRC 17206 / CCUG 44338 / CIP 107171 / LMG 19424 / R1) (Ralstonia taiwanensis (strain LMG 19424)).